The following is a 204-amino-acid chain: MIGRLRGILLEKQPPEVLIEVNGIGYEVQMPMSCFYELPNIGEEAIIYTHFVVREDAQLLYGFNTVKERALFREVIKANGVGPKLGLGILSGMTASQFVSCVEREDVSTLVKLPGVGKKTAERLVVEMKDRLKGWGAGDLFTPFTDAAPTDSAAASSNSAEEEAVSALLALGYKPTQASKVVSQIAKPDMSSEQLIREALKSMV.

The interval 1 to 64 (MIGRLRGILL…EDAQLLYGFN (64 aa)) is domain I. Positions 65–143 (TVKERALFRE…GWGAGDLFTP (79 aa)) are domain II. The tract at residues 144 to 155 (FTDAAPTDSAAA) is flexible linker. The tract at residues 156–204 (SSNSAEEEAVSALLALGYKPTQASKVVSQIAKPDMSSEQLIREALKSMV) is domain III.

Belongs to the RuvA family. As to quaternary structure, homotetramer. Forms an RuvA(8)-RuvB(12)-Holliday junction (HJ) complex. HJ DNA is sandwiched between 2 RuvA tetramers; dsDNA enters through RuvA and exits via RuvB. An RuvB hexamer assembles on each DNA strand where it exits the tetramer. Each RuvB hexamer is contacted by two RuvA subunits (via domain III) on 2 adjacent RuvB subunits; this complex drives branch migration. In the full resolvosome a probable DNA-RuvA(4)-RuvB(12)-RuvC(2) complex forms which resolves the HJ.

It localises to the cytoplasm. The RuvA-RuvB-RuvC complex processes Holliday junction (HJ) DNA during genetic recombination and DNA repair, while the RuvA-RuvB complex plays an important role in the rescue of blocked DNA replication forks via replication fork reversal (RFR). RuvA specifically binds to HJ cruciform DNA, conferring on it an open structure. The RuvB hexamer acts as an ATP-dependent pump, pulling dsDNA into and through the RuvAB complex. HJ branch migration allows RuvC to scan DNA until it finds its consensus sequence, where it cleaves and resolves the cruciform DNA. The sequence is that of Holliday junction branch migration complex subunit RuvA from Vibrio parahaemolyticus serotype O3:K6 (strain RIMD 2210633).